The sequence spans 443 residues: Thymidine phosphorylase (443 aa).

Belongs to the thymidine/pyrimidine-nucleoside phosphorylase family. In terms of assembly, homodimer.

It carries out the reaction thymidine + phosphate = 2-deoxy-alpha-D-ribose 1-phosphate + thymine. It functions in the pathway pyrimidine metabolism; dTMP biosynthesis via salvage pathway; dTMP from thymine: step 1/2. Its function is as follows. The enzymes which catalyze the reversible phosphorolysis of pyrimidine nucleosides are involved in the degradation of these compounds and in their utilization as carbon and energy sources, or in the rescue of pyrimidine bases for nucleotide synthesis. This chain is Thymidine phosphorylase, found in Photobacterium profundum (strain SS9).